A 340-amino-acid chain; its full sequence is Methionyl-tRNA formyltransferase (340 aa).

110 to 113 is a (6S)-5,6,7,8-tetrahydrofolate binding site; that stretch reads SLLP.

Belongs to the Fmt family.

The catalysed reaction is L-methionyl-tRNA(fMet) + (6R)-10-formyltetrahydrofolate = N-formyl-L-methionyl-tRNA(fMet) + (6S)-5,6,7,8-tetrahydrofolate + H(+). Its function is as follows. Attaches a formyl group to the free amino group of methionyl-tRNA(fMet). The formyl group appears to play a dual role in the initiator identity of N-formylmethionyl-tRNA by promoting its recognition by IF2 and preventing the misappropriation of this tRNA by the elongation apparatus. The polypeptide is Methionyl-tRNA formyltransferase (Synechococcus sp. (strain WH7803)).